The following is a 98-amino-acid chain: DNA-binding protein Fis (98 aa).

Residues Q74–K93 constitute a DNA-binding region (H-T-H motif).

The protein belongs to the transcriptional regulatory Fis family. Homodimer.

Its function is as follows. Activates ribosomal RNA transcription. Plays a direct role in upstream activation of rRNA promoters. The sequence is that of DNA-binding protein Fis from Photobacterium profundum (strain SS9).